The following is a 121-amino-acid chain: MNIVISKPDKNKIRQKRHRRVRGKISGTAARPRLNIFRSNTGIYAQVIDDVAGVTLASASTLDKEVSKGTKTEQAVVVGKLVAERAVAKGISEVVFDRGGYLYHGRVKALAESARENGLKF.

Belongs to the universal ribosomal protein uL18 family. As to quaternary structure, part of the 50S ribosomal subunit; part of the 5S rRNA/L5/L18/L25 subcomplex. Contacts the 5S and 23S rRNAs.

In terms of biological role, this is one of the proteins that bind and probably mediate the attachment of the 5S RNA into the large ribosomal subunit, where it forms part of the central protuberance. The sequence is that of Large ribosomal subunit protein uL18 from Streptococcus suis (strain 98HAH33).